We begin with the raw amino-acid sequence, 71 residues long: MTATEVKAKILSLLDEVAQGEEIEITKHGRTVARLVAATGPHALKGRFSGVAMAAADDDELFTTGVSWNVS.

Belongs to the phD/YefM antitoxin family.

Its function is as follows. Antitoxin component of a type II toxin-antitoxin (TA) system. Upon expression in M.smegmatis neutralizes the effect of cognate toxin VapC22. This chain is Antitoxin VapB22 (vapB22), found in Mycobacterium tuberculosis (strain ATCC 25618 / H37Rv).